A 190-amino-acid chain; its full sequence is dCTP deaminase, dUMP-forming (190 aa).

DCTP contacts are provided by residues 101 to 106 (KSSLGR), aspartate 119, 127 to 129 (TLE), glutamine 148, tyrosine 162, and glutamine 174. Glutamate 129 (proton donor/acceptor) is an active-site residue. The segment at 161 to 190 (PYGSSSVGSKYQGQRGPTPSRSYQNFVKND) is disordered. Residues 163 to 190 (GSSSVGSKYQGQRGPTPSRSYQNFVKND) show a composition bias toward polar residues.

It belongs to the dCTP deaminase family. As to quaternary structure, homotrimer.

The enzyme catalyses dCTP + 2 H2O = dUMP + NH4(+) + diphosphate. The protein operates within pyrimidine metabolism; dUMP biosynthesis; dUMP from dCTP: step 1/1. Bifunctional enzyme that catalyzes both the deamination of dCTP to dUTP and the hydrolysis of dUTP to dUMP without releasing the toxic dUTP intermediate. The protein is dCTP deaminase, dUMP-forming of Mycolicibacterium vanbaalenii (strain DSM 7251 / JCM 13017 / BCRC 16820 / KCTC 9966 / NRRL B-24157 / PYR-1) (Mycobacterium vanbaalenii).